Reading from the N-terminus, the 405-residue chain is Prostaglandin E2 receptor EP1 subtype (405 aa).

The Extracellular segment spans residues 1 to 39; sequence MSPCGLNLSLADEAATCATPRLPNTSVVLPTGDNGTSPA. Residues asparagine 7, asparagine 24, and asparagine 34 are each glycosylated (N-linked (GlcNAc...) asparagine). The helical transmembrane segment at 40 to 62 threads the bilayer; it reads LPIFSMTLGAVSNVLALALLAQV. Residues 63–80 lie on the Cytoplasmic side of the membrane; it reads AGRMRRRRSAATFLLFVA. Residues 81-99 form a helical membrane-spanning segment; the sequence is SLLAIDLAGHVIPGALVLR. Over 100-113 the chain is Extracellular; sequence LYTAGRAPAGGACH. Residues cysteine 112 and cysteine 190 are joined by a disulfide bond. A helical membrane pass occupies residues 114 to 135; the sequence is FLGGCMVFFGLCPLLLGCGMAV. The Cytoplasmic segment spans residues 136–157; it reads ERCVGVTQPLIHAARVSVARAR. A helical transmembrane segment spans residues 158–179; it reads LALAVLAAMALAVALLPLVHVG. At 180–202 the chain is on the extracellular side; sequence RYELQYPGTWCFISLGPRGGWRQ. The helical transmembrane segment at 203–228 threads the bilayer; that stretch reads ALLAGLFAGLGLAALLAALVCNTLSG. The Cytoplasmic portion of the chain corresponds to 229-301; sequence LALLRARWRR…HAHDVEMVGQ (73 aa). The disordered stretch occupies residues 243–287; sequence RFRKTAGPDDRRRWGSRGPRLASASSASSITSATATLRSSRGGGS. Residues 262-282 show a composition bias toward low complexity; the sequence is RLASASSASSITSATATLRSS. Residues 302–323 form a helical membrane-spanning segment; that stretch reads LVGIMVVSCICWSPLLVLVVLA. At 324-337 the chain is on the extracellular side; that stretch reads IGGWNSNSLQRPLF. The helical transmembrane segment at 338–357 threads the bilayer; sequence LAVRLASWNQILDPWVYILL. Residues 358-405 are Cytoplasmic-facing; it reads RQAMLRQLLRLLPLRVSAKGGPTELGLTKSAWEASSLRSSRHSGFSHL.

This sequence belongs to the G-protein coupled receptor 1 family. In terms of processing, phosphorylated. Abundant in kidney and in a lesser amount in lung.

Its subcellular location is the cell membrane. Functionally, receptor for prostaglandin E2 (PGE2). The activity of this receptor is mediated by G(q) proteins which activate a phosphatidylinositol-calcium second messenger system. May play a role as an important modulator of renal function. Implicated the smooth muscle contractile response to PGE2 in various tissues. The protein is Prostaglandin E2 receptor EP1 subtype (Ptger1) of Mus musculus (Mouse).